Here is a 404-residue protein sequence, read N- to C-terminus: uncharacterized protein (404 aa).

12 consecutive transmembrane segments (helical) span residues 3-23, 43-63, 73-93, 95-115, 135-155, 162-182, 216-236, 248-268, 280-300, 309-329, 346-366, and 377-397; these read IIAK…PITE, TTQI…LTLG, PVVL…IFAP, IETL…GSVI, SLSP…GYII, YTFV…CKIL, IIGA…FIFI, KLAF…GYLI, ILGL…ALIL, IAVI…NLLI, TAGS…TFLV, and FALL…YILI.

Belongs to the major facilitator superfamily. Bcr/CmlA family.

Its subcellular location is the cell inner membrane. This is an uncharacterized protein from Rickettsia bellii (strain RML369-C).